The following is a 945-amino-acid chain: Isoleucine--tRNA ligase (945 aa).

The 'HIGH' region signature appears at P66–H76. Residue E581 participates in L-isoleucyl-5'-AMP binding. The 'KMSKS' region signature appears at K622 to S626. Residue K625 coordinates ATP. The Zn(2+) site is built by C908, C911, C928, and C931.

Belongs to the class-I aminoacyl-tRNA synthetase family. IleS type 1 subfamily. In terms of assembly, monomer. Zn(2+) is required as a cofactor.

It is found in the cytoplasm. It catalyses the reaction tRNA(Ile) + L-isoleucine + ATP = L-isoleucyl-tRNA(Ile) + AMP + diphosphate. In terms of biological role, catalyzes the attachment of isoleucine to tRNA(Ile). As IleRS can inadvertently accommodate and process structurally similar amino acids such as valine, to avoid such errors it has two additional distinct tRNA(Ile)-dependent editing activities. One activity is designated as 'pretransfer' editing and involves the hydrolysis of activated Val-AMP. The other activity is designated 'posttransfer' editing and involves deacylation of mischarged Val-tRNA(Ile). This chain is Isoleucine--tRNA ligase, found in Burkholderia vietnamiensis (strain G4 / LMG 22486) (Burkholderia cepacia (strain R1808)).